The chain runs to 67 residues: MKPDIHPDYHEVAVTCSCGNNFKTRSTYQGSELNVEVCSACHPFFTGKQKIMDTAGQVDKFRRRYGM.

Positions 16, 18, 38, and 41 each coordinate Zn(2+).

The protein belongs to the bacterial ribosomal protein bL31 family. Type A subfamily. Part of the 50S ribosomal subunit. It depends on Zn(2+) as a cofactor.

In terms of biological role, binds the 23S rRNA. This chain is Large ribosomal subunit protein bL31, found in Thioalkalivibrio sulfidiphilus (strain HL-EbGR7).